A 335-amino-acid chain; its full sequence is Glucokinase (335 aa).

Residue 11–16 participates in ATP binding; that stretch reads ADIGGT.

The protein belongs to the bacterial glucokinase family.

It is found in the cytoplasm. It carries out the reaction D-glucose + ATP = D-glucose 6-phosphate + ADP + H(+). The sequence is that of Glucokinase from Xanthomonas axonopodis pv. citri (strain 306).